The chain runs to 197 residues: dCTP deaminase, dUMP-forming (197 aa).

DCTP-binding positions include 105–110, D123, 131–133, Q152, Y166, K174, and Q178; these read RSSMGR and TLE. E133 functions as the Proton donor/acceptor in the catalytic mechanism.

The protein belongs to the dCTP deaminase family. Homotrimer.

The enzyme catalyses dCTP + 2 H2O = dUMP + NH4(+) + diphosphate. It functions in the pathway pyrimidine metabolism; dUMP biosynthesis; dUMP from dCTP: step 1/1. Its function is as follows. Bifunctional enzyme that catalyzes both the deamination of dCTP to dUTP and the hydrolysis of dUTP to dUMP without releasing the toxic dUTP intermediate. The sequence is that of dCTP deaminase, dUMP-forming from Methanosphaera stadtmanae (strain ATCC 43021 / DSM 3091 / JCM 11832 / MCB-3).